The following is a 574-amino-acid chain: Sentrin-specific protease 3 (574 aa).

The disordered stretch occupies residues Met-1–Arg-125. 3 positions are modified to phosphoserine: Ser-54, Ser-73, and Ser-75. Acidic residues predominate over residues Ala-74–Val-93. The span at Arg-112–Arg-125 shows a compositional bias: basic residues. Short sequence motifs (nuclear localization signal) lie at residues Arg-125–Arg-128 and Arg-153–Arg-159. The disordered stretch occupies residues Leu-161–Ser-181. A Phosphoserine modification is found at Ser-169. Thr-176 is subject to Phosphothreonine. Residues Ser-181, Ser-188, Ser-212, and Ser-232 each carry the phosphoserine modification. Positions His-386–Leu-543 are protease. Residues His-465 and Asp-482 contribute to the active site. The active-site Nucleophile is the Cys-532.

It belongs to the peptidase C48 family. In terms of assembly, component of some MLL1/MLL complex, at least composed of the core components KMT2A/MLL1, ASH2L, HCFC1/HCF1, WDR5 and RBBP5, as well as the facultative components BACC1, CHD8, E2F6, HSP70, INO80C, KANSL1, LAS1L, MAX, MCRS1, MGA, MYST1/MOF, PELP1, PHF20, PRP31, RING2, RUVB1/TIP49A, RUVB2/TIP49B, SENP3, TAF1, TAF4, TAF6, TAF7, TAF9 and TEX10. Interacts with EP300, NPM1 and CDCA8. Component of the 5FMC complex, at least composed of PELP1, LAS1L, TEX10, WDR18 and SENP3; the complex interacts with methylated CHTOP and ZNF148. Interacts with NOL9. Interacts with CCAR2.

The protein localises to the nucleus. Its subcellular location is the nucleolus. It is found in the nucleoplasm. It localises to the cytoplasm. On oxidative stress, SENP3 degradation is blocked by inhibition of its ubiquitination, which stabilizes it as it accumulates in the nucleoplasm. Its function is as follows. Protease that releases SUMO2 and SUMO3 monomers from sumoylated substrates, but has only weak activity against SUMO1 conjugates. Deconjugates SUMO2 from MEF2D, which increases its transcriptional activation capability. Deconjugates SUMO2 and SUMO3 from CDCA8. Redox sensor that, when redistributed into nucleoplasm, can act as an effector to enhance HIF1A transcriptional activity by desumoylating EP300. Required for rRNA processing through deconjugation of SUMO2 and SUMO3 from nucleophosmin, NPM1. Plays a role in the regulation of sumoylation status of ZNF148. Functions as a component of the Five Friends of Methylated CHTOP (5FMC) complex; the 5FMC complex is recruited to ZNF148 by methylated CHTOP, leading to desumoylation of ZNF148 and subsequent transactivation of ZNF148 target genes. Deconjugates SUMO2 from KAT5. Catalyzes desumoylation of MRE11. The sequence is that of Sentrin-specific protease 3 from Homo sapiens (Human).